The sequence spans 266 residues: Tryptophan synthase alpha chain (266 aa).

Active-site proton acceptor residues include Glu49 and Asp60.

It belongs to the TrpA family. As to quaternary structure, tetramer of two alpha and two beta chains.

The catalysed reaction is (1S,2R)-1-C-(indol-3-yl)glycerol 3-phosphate + L-serine = D-glyceraldehyde 3-phosphate + L-tryptophan + H2O. It functions in the pathway amino-acid biosynthesis; L-tryptophan biosynthesis; L-tryptophan from chorismate: step 5/5. In terms of biological role, the alpha subunit is responsible for the aldol cleavage of indoleglycerol phosphate to indole and glyceraldehyde 3-phosphate. The polypeptide is Tryptophan synthase alpha chain (Synechococcus elongatus (strain ATCC 33912 / PCC 7942 / FACHB-805) (Anacystis nidulans R2)).